Consider the following 204-residue polypeptide: Minor allergen Cla h 7 (204 aa).

One can recognise a Flavodoxin-like domain in the interval 5 to 195; the sequence is IAIIFYSTWG…ELTAQGKAFY (191 aa).

The protein belongs to the WrbA family.

It is found in the cytoplasm. The polypeptide is Minor allergen Cla h 7 (CLAH7) (Davidiella tassiana (Mycosphaerella tassiana)).